Reading from the N-terminus, the 266-residue chain is Small ribosomal subunit protein eS1 (266 aa).

Positions 235 to 266 are disordered; that stretch reads GGAGGAAKASGDDTGAKVERADGYEPPIQETV. Residues 244–257 are compositionally biased toward basic and acidic residues; sequence SGDDTGAKVERADG.

The protein belongs to the eukaryotic ribosomal protein eS1 family. As to quaternary structure, component of the small ribosomal subunit. Mature ribosomes consist of a small (40S) and a large (60S) subunit. The 40S subunit contains about 33 different proteins and 1 molecule of RNA (18S). The 60S subunit contains about 49 different proteins and 3 molecules of RNA (28S, 5.8S and 5S).

Its subcellular location is the cytoplasm. In terms of biological role, component of the small ribosomal subunit. The ribosome is a large ribonucleoprotein complex responsible for the synthesis of proteins in the cell. The polypeptide is Small ribosomal subunit protein eS1 (rps3a) (Oryzias latipes (Japanese rice fish)).